The chain runs to 212 residues: Probable GTP-binding protein EngB (212 aa).

One can recognise an EngB-type G domain in the interval 38 to 210 (SLPEIAFVGK…KASLAKCIKP (173 aa)). Residues 46–53 (GKSNVGKS), 73–77 (GRTRQ), 91–94 (DLPG), 158–161 (TKSD), and 189–191 (VSS) each bind GTP. Mg(2+) contacts are provided by serine 53 and threonine 75.

Belongs to the TRAFAC class TrmE-Era-EngA-EngB-Septin-like GTPase superfamily. EngB GTPase family. Mg(2+) is required as a cofactor.

In terms of biological role, necessary for normal cell division and for the maintenance of normal septation. The polypeptide is Probable GTP-binding protein EngB (Rickettsia felis (strain ATCC VR-1525 / URRWXCal2) (Rickettsia azadi)).